The following is a 548-amino-acid chain: Pentatricopeptide repeat-containing protein At5g15300 (548 aa).

PPR repeat units lie at residues 76–110, 111–145, 146–176, 177–211, 212–238, 239–273, 274–308, 314–348, 349–378, 379–409, and 415–445; these read DVSI…GVSP, DRYT…GFVL, NEYV…SAKA, HKVA…DQVA, WNVM…FTEK, DVVT…GEHP, DVVT…ASVS, GTPI…DLST, WNTL…KVWP, NEVT…MRDM, and NIKH…MKIE. Positions 450–525 are type E motif; it reads VWRTLLGACK…PTGVSLIEED (76 aa).

It belongs to the PPR family. PCMP-E subfamily.

The protein is Pentatricopeptide repeat-containing protein At5g15300 (PCMP-E40) of Arabidopsis thaliana (Mouse-ear cress).